Here is a 447-residue protein sequence, read N- to C-terminus: 3-phosphoshikimate 1-carboxyvinyltransferase 2 (447 aa).

3-phosphoshikimate is bound by residues Lys-40, Ser-41, and Arg-45. Lys-40 is a phosphoenolpyruvate binding site. Phosphoenolpyruvate is bound by residues Gly-109 and Arg-138. 3-phosphoshikimate is bound by residues Ser-184, Ser-185, Gln-186, Asp-329, and His-356. A phosphoenolpyruvate-binding site is contributed by Gln-186. Asp-329 acts as the Proton acceptor in catalysis. The phosphoenolpyruvate site is built by Arg-360, Arg-403, and Lys-428.

The protein belongs to the EPSP synthase family. As to quaternary structure, monomer.

It is found in the cytoplasm. The enzyme catalyses 3-phosphoshikimate + phosphoenolpyruvate = 5-O-(1-carboxyvinyl)-3-phosphoshikimate + phosphate. It participates in metabolic intermediate biosynthesis; chorismate biosynthesis; chorismate from D-erythrose 4-phosphate and phosphoenolpyruvate: step 6/7. Functionally, catalyzes the transfer of the enolpyruvyl moiety of phosphoenolpyruvate (PEP) to the 5-hydroxyl of shikimate-3-phosphate (S3P) to produce enolpyruvyl shikimate-3-phosphate and inorganic phosphate. The chain is 3-phosphoshikimate 1-carboxyvinyltransferase 2 from Halalkalibacterium halodurans (strain ATCC BAA-125 / DSM 18197 / FERM 7344 / JCM 9153 / C-125) (Bacillus halodurans).